We begin with the raw amino-acid sequence, 1393 residues long: Protein strawberry notch homolog 1 (1393 aa).

Residues 129 to 148 (STRPSVSAPTVRNAMTSAPS) are disordered. Residue S148 is modified to Phosphoserine. Position 149 is an N6-acetyllysine (K149). Phosphoserine occurs at positions 162 and 214. K413 is subject to N6-acetyllysine. The disordered stretch occupies residues 687–840 (APSNNSSPRD…ANSNTNSNSS (154 aa)). Phosphoserine occurs at positions 692, 693, and 697. Over residues 697 to 716 (SPCKENKIKKRKGEEITREA) the composition is skewed to basic and acidic residues. Acidic residues predominate over residues 733 to 747 (SGSESDASDNEESDY). Residues S754, S755, and S768 each carry the phosphoserine modification. The span at 756-775 (GDDDDFNPFLDESNEDDEND) shows a compositional bias: acidic residues. A compositionally biased stretch (basic residues) spans 781–793 (KDHKKNKEKKKKK). S794 and S815 each carry phosphoserine. A compositionally biased stretch (low complexity) spans 824–840 (PAPNSTPANSNTNSNSS). Residues 843 to 870 (TSQDAVERAQQMKKDLLDKLEKLAEDLP) adopt a coiled-coil conformation. The residue at position 1222 (K1222) is an N6-acetyllysine. The residue at position 1386 (S1386) is a Phosphoserine.

This sequence belongs to the SBNO family.

The protein resides in the nucleus. Functionally, plays a crucial role in the regulation of neural stem cells (NSCs) proliferation. Enhances the phosphorylation of GSK3B through the PI3K-Akt signaling pathway, thereby upregulating the Wnt/beta-catenin signaling pathway and promoting the proliferation of NSCs. Improves ischemic stroke recovery while inhibiting neuroinflammation through small extracellular vesicles (sEVs)-mediated mechanism. Enhances the secretion of sEVs from NSCs, which in turn inhibit both the MAPK and NF-kappaB pathways in microglia. This inhibition suppresses the pro-inflammatory M1 polarization of microglia, promoting a shift towards the M2 anti-inflammatory phenotype, which is beneficial for reducing neuroinflammation. This Homo sapiens (Human) protein is Protein strawberry notch homolog 1 (SBNO1).